The primary structure comprises 326 residues: MNRHADVPVIDISGLSGNDMDVKKDIAARIDRACRGSGFFYAANHGVDLAALQKFTTDWHMAMSPEEKWELAIRAYNPANPRNRNGYYMAVEGKKANESFCYLNPSFDADHATIKAGLPSHEVNIWPDEARHPGMRRFYEAYFSDVFDVAAVILRGFAIALGREESFFERHFSMDDTLSAVSLIRYPFLENYPPLKLGPDGEKLSFEHHQDVSLITVLYQTAIPNLQVETAEGYLDIPVSDEHFLVNCGTYMAHITNGYYPAPVHRVKYINAERLSIPFFANLSHASAIDPFAPPPYAPARGNPTVSYGDYLQHGLLDLIRANGQT.

Residues R84, Y88, and Y186 each contribute to the isopenicillin N site. Residues R84, Y88, Y186, H209, and D211 each coordinate N-[(5S)-5-amino-5-carboxypentanoyl]-L-cysteinyl-D-valine. Residues 183–283 (LIRYPFLENY…RLSIPFFANL (101 aa)) enclose the Fe2OG dioxygenase domain. Positions 209, 211, and 265 each coordinate Fe(2+). Position 274 (R274) interacts with 2-oxoglutarate. Residue S276 coordinates isopenicillin N. S276 is an N-[(5S)-5-amino-5-carboxypentanoyl]-L-cysteinyl-D-valine binding site.

It belongs to the iron/ascorbate-dependent oxidoreductase family. The cofactor is Fe cation. L-ascorbate is required as a cofactor.

The enzyme catalyses N-[(5S)-5-amino-5-carboxypentanoyl]-L-cysteinyl-D-valine + O2 = isopenicillin N + 2 H2O. It functions in the pathway antibiotic biosynthesis; penicillin G biosynthesis; penicillin G from L-alpha-aminoadipate and L-cysteine and L-valine: step 2/3. Its function is as follows. Removes, in the presence of oxygen, 4 hydrogen atoms from delta-L-(alpha-aminoadipyl)-L-cysteinyl-D-valine (ACV) to form the azetidinone and thiazolidine rings of isopenicillin. The sequence is that of Isopenicillin N synthase (pcbC) from Lysobacter lactamgenus.